Here is a 590-residue protein sequence, read N- to C-terminus: Arginine--tRNA ligase (590 aa).

The 'HIGH' region motif lies at 130–140 (PNIAKEMHVGH).

This sequence belongs to the class-I aminoacyl-tRNA synthetase family. In terms of assembly, monomer.

It is found in the cytoplasm. It carries out the reaction tRNA(Arg) + L-arginine + ATP = L-arginyl-tRNA(Arg) + AMP + diphosphate. The protein is Arginine--tRNA ligase of Synechococcus sp. (strain CC9605).